The chain runs to 243 residues: Juxtaposed with another zinc finger protein 1 (243 aa).

The C2H2-type 1 zinc finger occupies 12–37 (NTCRFGGCGLHFPTLADLIEHIEDNH). The tract at residues 39–79 (DTDPRVLEKQELQQPTYVALSYINRFMTDAARREQESLKKK) is required for interaction with NR2C2. Polar residues predominate over residues 89–108 (SSSVSRGNVSTPPRHSSGSL). A disordered region spans residues 89-151 (SSSVSRGNVS…SDSDESWTTE (63 aa)). 2 positions are modified to phosphothreonine: Thr109 and Thr113. The span at 118-130 (PSSSFRSSTPTGS) shows a compositional bias: low complexity. A compositionally biased stretch (acidic residues) spans 131–148 (EYDEEEVDYEESDSDESW). Residues 173-198 (FACPVPGCKKRYKNVNGIKYHAKNGH) form a C2H2-type 2 zinc finger. The C2H2-type 3; degenerate zinc finger occupies 208-230 (FKCRCGKSYKTAQGLRHHTINFH).

As to quaternary structure, interacts with NR2C2 (via ligand-binding region). As to expression, highest expression in testis with moderate levels in colon, placenta, prostate and ovary and low levels in brain, spleen, liver and small intestine.

The protein resides in the nucleus. Functionally, acts as a transcriptional corepressor of orphan nuclear receptor NR2C2. Inhibits expression of the gluconeogenesis enzyme PCK2 through inhibition of NR2C2 activity. Also involved in transcriptional activation of NAMPT by promoting expression of PPARA and PPARD. Plays a role in lipid metabolism by suppressing lipogenesis, increasing lipolysis and decreasing lipid accumulation in adipose tissue. Plays a role in glucose homeostasis by improving glucose metabolism and insulin sensitivity. In Homo sapiens (Human), this protein is Juxtaposed with another zinc finger protein 1.